A 279-amino-acid chain; its full sequence is Undecaprenyl-diphosphatase (279 aa).

Transmembrane regions (helical) follow at residues 2–22 (LFIE…TEWL), 44–64 (AFME…VIVI), 85–105 (WQLW…AVPL), 113–133 (FNHM…FLWI), 163–183 (VLSI…AIIL), 188–208 (TVAA…YSGL), 225–245 (LLVL…VIKL), and 255–275 (FTVF…YSVF).

This sequence belongs to the UppP family.

The protein localises to the cell membrane. The enzyme catalyses di-trans,octa-cis-undecaprenyl diphosphate + H2O = di-trans,octa-cis-undecaprenyl phosphate + phosphate + H(+). Its function is as follows. Catalyzes the dephosphorylation of undecaprenyl diphosphate (UPP). Confers resistance to bacitracin. This Streptococcus equi subsp. zooepidemicus (strain MGCS10565) protein is Undecaprenyl-diphosphatase.